The chain runs to 871 residues: Major vault protein (871 aa).

9 MVP repeats span residues 2 to 69, 70 to 124, 125 to 177, 178 to 230, 231 to 285, 286 to 336, 337 to 407, 408 to 482, and 483 to 545; these read SKRP…VPPR, HYCV…EVTP, LQIV…EIIK, ATVI…DIVN, AFIL…GVVD, VTTL…IQDV, YVLS…RRQA, IPLD…KTMV, and VSYR…LLGP. A disordered region spans residues 356-381; the sequence is TEAQEEDEEEEEEEEQAKKTSVQRRP. A compositionally biased stretch (acidic residues) spans 357–370; sequence EAQEEDEEEEEEEE. Positions 684-710 are disordered; it reads QEATARHEAERLEQEARGKLERQKITD. Residues 687 to 710 show a composition bias toward basic and acidic residues; the sequence is TARHEAERLEQEARGKLERQKITD. The IQ domain maps to 688–717; the sequence is ARHEAERLEQEARGKLERQKITDQAEAERA.

In terms of assembly, the vault ribonucleoprotein particle is a huge (400 A x 670 A) cage structure of 12.9 MDa. It consists of a dimer of half-vaults, with each half-vault comprising 39 identical major vault protein (MVP) chains, PARP4 and one or more vault RNAs (vRNAs).

It is found in the cytoplasm. Its subcellular location is the nucleus. In terms of biological role, required for normal vault structure. Vaults are multi-subunit structures that may act as scaffolds for proteins involved in signal transduction. Vaults may also play a role in nucleo-cytoplasmic transport. In Ictalurus punctatus (Channel catfish), this protein is Major vault protein (mvp).